We begin with the raw amino-acid sequence, 169 residues long: Orotate phosphoribosyltransferase (169 aa).

5-phospho-alpha-D-ribose 1-diphosphate is bound by residues arginine 86, lysine 90, histidine 92, and 111–119 (EDVTTSGGS). Residues threonine 115 and arginine 143 each contribute to the orotate site.

This sequence belongs to the purine/pyrimidine phosphoribosyltransferase family. PyrE subfamily. In terms of assembly, homodimer. Mg(2+) is required as a cofactor.

The catalysed reaction is orotidine 5'-phosphate + diphosphate = orotate + 5-phospho-alpha-D-ribose 1-diphosphate. Its pathway is pyrimidine metabolism; UMP biosynthesis via de novo pathway; UMP from orotate: step 1/2. Catalyzes the transfer of a ribosyl phosphate group from 5-phosphoribose 1-diphosphate to orotate, leading to the formation of orotidine monophosphate (OMP). This chain is Orotate phosphoribosyltransferase, found in Methanocorpusculum labreanum (strain ATCC 43576 / DSM 4855 / Z).